Reading from the N-terminus, the 174-residue chain is Large ribosomal subunit protein uL18 (174 aa).

This sequence belongs to the universal ribosomal protein uL18 family. As to quaternary structure, part of the 50S ribosomal subunit. Contacts the 5S and 23S rRNAs.

Functionally, this is one of the proteins that bind and probably mediate the attachment of the 5S RNA into the large ribosomal subunit, where it forms part of the central protuberance. This is Large ribosomal subunit protein uL18 from Methanosarcina acetivorans (strain ATCC 35395 / DSM 2834 / JCM 12185 / C2A).